The following is a 216-amino-acid chain: Probable transaldolase (216 aa).

The Schiff-base intermediate with substrate role is filled by lysine 83.

This sequence belongs to the transaldolase family. Type 3B subfamily.

The protein localises to the cytoplasm. The catalysed reaction is D-sedoheptulose 7-phosphate + D-glyceraldehyde 3-phosphate = D-erythrose 4-phosphate + beta-D-fructose 6-phosphate. It functions in the pathway carbohydrate degradation; pentose phosphate pathway; D-glyceraldehyde 3-phosphate and beta-D-fructose 6-phosphate from D-ribose 5-phosphate and D-xylulose 5-phosphate (non-oxidative stage): step 2/3. Its function is as follows. Transaldolase is important for the balance of metabolites in the pentose-phosphate pathway. This Hyphomonas neptunium (strain ATCC 15444) protein is Probable transaldolase.